Reading from the N-terminus, the 250-residue chain is MKSRYLVFFLPLIVAKYTSAETVQPFHSPEESVNSQFYLPPPPGNDDPAYRYDKEAYFKGYAIKGSPRWKQAAEDADVSVENIARIFSPVVGAKINPKDTPETWNMLKNLLTMGGYYATASAKKYYMRTRPFVLFNHSTCRPEDENTLRKNGSYPSGHTAYGTLLALVLSEARPERAQELARRGWEFGQSRVICGAHWQSDVDAGRYVGAVEFARLQTIPAFQKSLAKVREELNDKNNLLSKEDHPKLNY.

Residues 1 to 20 form the signal peptide; sequence MKSRYLVFFLPLIVAKYTSA.

The protein belongs to the class A bacterial acid phosphatase family. Homodimer.

It localises to the periplasm. It catalyses the reaction a phosphate monoester + H2O = an alcohol + phosphate. The protein is Non-specific acid phosphatase (phoN) of Salmonella typhimurium (strain LT2 / SGSC1412 / ATCC 700720).